A 448-amino-acid chain; its full sequence is Trigger factor (448 aa).

The 86-residue stretch at 172–257 (GDRVTVDFVG…MKKIEWPHLP (86 aa)) folds into the PPIase FKBP-type domain.

It belongs to the FKBP-type PPIase family. Tig subfamily.

The protein localises to the cytoplasm. The enzyme catalyses [protein]-peptidylproline (omega=180) = [protein]-peptidylproline (omega=0). Involved in protein export. Acts as a chaperone by maintaining the newly synthesized protein in an open conformation. Functions as a peptidyl-prolyl cis-trans isomerase. This Burkholderia cenocepacia (strain ATCC BAA-245 / DSM 16553 / LMG 16656 / NCTC 13227 / J2315 / CF5610) (Burkholderia cepacia (strain J2315)) protein is Trigger factor.